The following is a 423-amino-acid chain: CinA-like protein (423 aa).

It belongs to the CinA family.

In Desulforapulum autotrophicum (strain ATCC 43914 / DSM 3382 / VKM B-1955 / HRM2) (Desulfobacterium autotrophicum), this protein is CinA-like protein.